The following is a 124-amino-acid chain: Multifunctional methyltransferase subunit TRM112 homolog B (124 aa).

The TRM112 domain occupies 2 to 120 (RLIVHNMLSC…SKGIPNMLLH (119 aa)).

This sequence belongs to the TRM112 family. As to quaternary structure, interacts with TRM9. Expressed in anthers.

In terms of biological role, acts as an activator of both rRNA/tRNA and protein methyltransferases. Required for TRM9 tRNA methyltransferase activity. In Arabidopsis thaliana (Mouse-ear cress), this protein is Multifunctional methyltransferase subunit TRM112 homolog B.